We begin with the raw amino-acid sequence, 117 residues long: Pterin-4-alpha-carbinolamine dehydratase 2 (117 aa).

N6-acetyllysine; alternate is present on residues Lys101, Lys105, and Lys112. An N6-succinyllysine; alternate mark is found at Lys101, Lys105, and Lys112.

The protein belongs to the pterin-4-alpha-carbinolamine dehydratase family. As to quaternary structure, homotetramer. Interacts with DYRK1B.

The enzyme catalyses (4aS,6R)-4a-hydroxy-L-erythro-5,6,7,8-tetrahydrobiopterin = (6R)-L-erythro-6,7-dihydrobiopterin + H2O. Functionally, involved in tetrahydrobiopterin biosynthesis. Seems to both prevent the formation of 7-pterins and accelerate the formation of quinonoid-BH2. Its function is as follows. Regulates the dimerization of homeodomain protein HNF-1-alpha and enhances its transcriptional activity. The protein is Pterin-4-alpha-carbinolamine dehydratase 2 (PCBD2) of Pongo abelii (Sumatran orangutan).